Reading from the N-terminus, the 193-residue chain is NAD(P)H-quinone oxidoreductase subunit I (193 aa).

4Fe-4S ferredoxin-type domains lie at 55–84 (GRIH…VDWE) and 95–124 (KHYS…VTEE). [4Fe-4S] cluster contacts are provided by Cys64, Cys67, Cys70, Cys74, Cys104, Cys107, Cys110, and Cys114.

Belongs to the complex I 23 kDa subunit family. As to quaternary structure, NDH-1 is composed of at least 11 different subunits. It depends on [4Fe-4S] cluster as a cofactor.

Its subcellular location is the cellular thylakoid membrane. The catalysed reaction is a plastoquinone + NADH + (n+1) H(+)(in) = a plastoquinol + NAD(+) + n H(+)(out). It carries out the reaction a plastoquinone + NADPH + (n+1) H(+)(in) = a plastoquinol + NADP(+) + n H(+)(out). Functionally, NDH-1 shuttles electrons from an unknown electron donor, via FMN and iron-sulfur (Fe-S) centers, to quinones in the respiratory and/or the photosynthetic chain. The immediate electron acceptor for the enzyme in this species is believed to be plastoquinone. Couples the redox reaction to proton translocation, and thus conserves the redox energy in a proton gradient. The sequence is that of NAD(P)H-quinone oxidoreductase subunit I from Cyanothece sp. (strain PCC 7425 / ATCC 29141).